The chain runs to 328 residues: MNLIHFGAGNIGCGFIAPILSSIVDHIYFVDNNIDIVNKINTQKLIKIHTSDSKKISITNISAWLLTDFINYKKTWNEVSLLTISIGIKNLKHIIYYVNQLIDYKIKNNQKLIIMCCENGIRVSSLFKSYFSNLNNNIYFVDVLVDRIVSNKNILNDYLECEDYYLWIVDKTQLPSDFKQVPNLTYTTSFDIQITKKIYMLNALHCSLAWFVFKNFSFNKYLYVYQALKNDKVVEFVNNYLNEVILVLNHKYNINLDELNNYKNQIIKRLNSNFIKDDLKRLARNTELKLSKNERILTILDYAKDNNLKHDILLLSYQNGLEYLKNNK.

3-14 (LIHFGAGNIGCG) serves as a coordination point for NAD(+).

Belongs to the mannitol dehydrogenase family.

It carries out the reaction D-mannitol 1-phosphate + NAD(+) = beta-D-fructose 6-phosphate + NADH + H(+). In Mycoplasma mycoides subsp. mycoides SC (strain CCUG 32753 / NCTC 10114 / PG1), this protein is Mannitol-1-phosphate 5-dehydrogenase (mtlD).